We begin with the raw amino-acid sequence, 427 residues long: 3-phosphoshikimate 1-carboxyvinyltransferase (427 aa).

The 3-phosphoshikimate site is built by K20, S21, and R25. K20 is a binding site for phosphoenolpyruvate. G92 and R120 together coordinate phosphoenolpyruvate. 3-phosphoshikimate-binding residues include S166, Q168, D312, and K339. Q168 lines the phosphoenolpyruvate pocket. Catalysis depends on D312, which acts as the Proton acceptor. Phosphoenolpyruvate contacts are provided by R343 and R385.

The protein belongs to the EPSP synthase family. Monomer.

Its subcellular location is the cytoplasm. The enzyme catalyses 3-phosphoshikimate + phosphoenolpyruvate = 5-O-(1-carboxyvinyl)-3-phosphoshikimate + phosphate. It participates in metabolic intermediate biosynthesis; chorismate biosynthesis; chorismate from D-erythrose 4-phosphate and phosphoenolpyruvate: step 6/7. Its function is as follows. Catalyzes the transfer of the enolpyruvyl moiety of phosphoenolpyruvate (PEP) to the 5-hydroxyl of shikimate-3-phosphate (S3P) to produce enolpyruvyl shikimate-3-phosphate and inorganic phosphate. The chain is 3-phosphoshikimate 1-carboxyvinyltransferase from Streptococcus pneumoniae serotype 19F (strain G54).